Consider the following 153-residue polypeptide: Actin-related protein 2/3 complex subunit 5-like protein (153 aa).

Ser64 is subject to Phosphoserine.

It belongs to the ARPC5 family. In terms of assembly, may be a component of the Arp2/3 complex in which it may replace ARPC5.

It is found in the cytoplasm. It localises to the cytoskeleton. Its function is as follows. May function as component of the Arp2/3 complex which is involved in regulation of actin polymerization and together with an activating nucleation-promoting factor (NPF) mediates the formation of branched actin networks. The chain is Actin-related protein 2/3 complex subunit 5-like protein (ARPC5L) from Pongo abelii (Sumatran orangutan).